The sequence spans 352 residues: MVFRIASSPYTHNQRQTSRIMLLVLIAALPGIAAQTWFFGWGTLFQIVLAAITALVAEAIVLRLRKQSVASHLQDYSALLTGLLLAVSIPPLAPWWMVVLGTGFAIIIAKQLYGGLGQNPFNPAMIGYVVLLISFPVQMTSWLPPYEIAATTPDMLDTLRMIFSGHTASGGDMTLLRIGIDGISQATPLDTFKTSLRAGHSVEQIMQYPIYSGALAGVGWQWVNLAWLVGGVFLLWQKAIRWHIPVSFLLTLALCAALGWLFSPATLASPQLHLLSGATMLGAFFILTDPVTASTTNRGRLIFGALAGVLVWLIRSFGGYPDGVAFAVLLANITVPLIDYYTRPRVYGHRKG.

Transmembrane regions (helical) follow at residues 20-40 (IMLL…WFFG), 42-62 (GTLF…AIVL), 69-91 (VASH…SIPP), and 123-143 (PAMI…TSWL). Thr-187 carries the post-translational modification FMN phosphoryl threonine. The next 5 helical transmembrane spans lie at 215 to 235 (LAGV…VFLL), 242 to 262 (WHIP…GWLF), 267 to 287 (LASP…FFIL), 301 to 321 (LIFG…GGYP), and 322 to 342 (DGVA…DYYT).

The protein belongs to the NqrB/RnfD family. In terms of assembly, the complex is composed of six subunits: RsxA, RsxB, RsxC, RsxD, RsxE and RsxG. Requires FMN as cofactor.

It localises to the cell inner membrane. Functionally, part of a membrane-bound complex that couples electron transfer with translocation of ions across the membrane. Required to maintain the reduced state of SoxR. The protein is Ion-translocating oxidoreductase complex subunit D of Salmonella paratyphi B (strain ATCC BAA-1250 / SPB7).